We begin with the raw amino-acid sequence, 351 residues long: MFSLSSRFFLYSLCLSAVAVSAAPGLSLSLSGADSVVDVENLNVAATLTNTGDTTLKILNDPSSILSSKFATHTFDISSDNGSPAFTGVKVKYDPNYVVKKNADSSFTVLAPGESVTVNHALGAAYNFTGSGAASYSIEPSSLFYYVDPDTNELASINADTQQHTTKISGTLAVARRSNLGKRISYNGCTSSRQTTLVSAAAAAQTYAQSSYNYLSSHTASTTRYVTWFGPYTSARHSTVLSCFSNMLAYPYANYEYDCTCTESDVYAYVYPSQFGTIYLCGAFWQTTTTGTDSRGGTLIHESSHFTIICGTQDYAYGQSAAKSLASSNPSEAIKNADNYEYFAENNPAQS.

Residues 1-22 (MFSLSSRFFLYSLCLSAVAVSA) form the signal peptide. The propeptide occupies 23–183 (APGLSLSLSG…VARRSNLGKR (161 aa)). 2 disulfide bridges follow: cysteine 189-cysteine 259 and cysteine 261-cysteine 281. Histidine 301 is a binding site for Zn(2+). Glutamate 302 is a catalytic residue. Zn(2+) is bound by residues histidine 305 and aspartate 314.

This sequence belongs to the peptidase M35 family. Zn(2+) serves as cofactor.

It localises to the secreted. It carries out the reaction Preferential cleavage in proteins: -Xaa-|-Lys- (in which Xaa may be Pro).. With respect to regulation, inhibited by chelating agents such as imidazole, alpha,alpha'-bipyridine, and 1,10-phenanthroline. This Armillaria mellea (Honey mushroom) protein is Peptidyl-Lys metalloendopeptidase (MEP).